The sequence spans 191 residues: Probable calcium-binding protein CML8 (191 aa).

Residues 1-41 (MASKYRGYYHDEASSAAGGGGGGGGGDGYRREKQVRKKRLT) form a disordered region. A compositionally biased stretch (gly residues) spans 17–27 (AGGGGGGGGGD). 4 EF-hand domains span residues 43-78 (QKRK…LGFE), 79-114 (MTPE…KMGE), 116-151 (DARE…TGEP), and 152-187 (FTLD…IGFG). The Ca(2+) site is built by Asp-56, Asp-58, Ser-60, Thr-62, Glu-67, Asp-92, Asp-94, Ser-96, Thr-98, Glu-103, Asp-129, Asp-131, Asn-133, Lys-135, Asp-140, Asp-165, Asn-167, Asp-169, Glu-171, and Glu-176.

Functionally, potential calcium sensor. The polypeptide is Probable calcium-binding protein CML8 (CML8) (Oryza sativa subsp. japonica (Rice)).